A 265-amino-acid chain; its full sequence is Putative hydro-lyase PA2116 (265 aa).

Belongs to the D-glutamate cyclase family.

In Pseudomonas aeruginosa (strain ATCC 15692 / DSM 22644 / CIP 104116 / JCM 14847 / LMG 12228 / 1C / PRS 101 / PAO1), this protein is Putative hydro-lyase PA2116.